Reading from the N-terminus, the 180-residue chain is Adenine phosphoribosyltransferase (180 aa).

Belongs to the purine/pyrimidine phosphoribosyltransferase family. In terms of assembly, homodimer.

The protein localises to the cytoplasm. It catalyses the reaction AMP + diphosphate = 5-phospho-alpha-D-ribose 1-diphosphate + adenine. Its pathway is purine metabolism; AMP biosynthesis via salvage pathway; AMP from adenine: step 1/1. In terms of biological role, catalyzes a salvage reaction resulting in the formation of AMP, that is energically less costly than de novo synthesis. The protein is Adenine phosphoribosyltransferase of Mannheimia succiniciproducens (strain KCTC 0769BP / MBEL55E).